The chain runs to 327 residues: MSFLGGFFGPICEIDIVLNDGETRKMAEMKTEDGKVEKHYLFYDGESVSGKVNLAFKQPGKRLEHQGIRIEFVGQIELFNDKSNTHEFVNLVKELALPGELTQSRSYDFEFMQVEKPYESYIGANVRLRYFLKVTIVRRLTDLVKEYDLIVHQLATYPDVNNSIKMEVGIEDCLHIEFEYNKSKYHLKDVIVGKIYFLLVRIKIQHMELQLIKKEITGIGPSTTTETETIAKYEIMDGAPVKGESIPIRLFLAGYDPTPTMRDVNKKFSVRYFLNLVLVDEEDRRYFKQQEIILWRKAPEKLRKQRTNFHQRFESPESQASAEQPEM.

A disordered region spans residues 306-327 (RTNFHQRFESPESQASAEQPEM). Position 315 is a phosphoserine (Ser315). The segment covering 316 to 327 (PESQASAEQPEM) has biased composition (polar residues).

The protein belongs to the VPS26 family. In terms of assembly, component of the heterotrimeric retromer cargo-selective complex (CSC), also described as vacuolar protein sorting subcomplex (VPS), formed by VPS26 (VPS26A or VPS26B), VPS29 and VPS35. The CSC has a highly elongated structure with VPS26 and VPS29 binding independently at opposite distal ends of VPS35 as central platform. The CSC is believed to associate with variable sorting nexins to form functionally distinct retromer complex variants. The originally described retromer complex (also called SNX-BAR retromer) is a pentamer containing the CSC and a heterodimeric membrane-deforming subcomplex formed between SNX1 or SNX2 and SNX5 or SNX6 (also called SNX-BAR subcomplex); the respective CSC and SNX-BAR subcomplexes associate with low affinity. The CSC associates with SNX3 to form a SNX3-retromer complex. The CSC associates with SNX27, the WASH complex and the SNX-BAR subcomplex to form the SNX27-retromer complex. Interacts with VPS29, VPS35, SNX1, SNX2, SNX5, SNX6, SNX3, SNX27, RAB7A, ECPAS, EHD1, WASHC5, SORL1.

The protein resides in the cytoplasm. It localises to the endosome membrane. The protein localises to the early endosome. Acts as a component of the retromer cargo-selective complex (CSC). The CSC is believed to be the core functional component of retromer or respective retromer complex variants acting to prevent missorting of selected transmembrane cargo proteins into the lysosomal degradation pathway. The recruitment of the CSC to the endosomal membrane involves RAB7A and SNX3. The SNX-BAR retromer mediates retrograde transport of cargo proteins from endosomes to the trans-Golgi network (TGN) and is involved in endosome-to-plasma membrane transport for cargo protein recycling. The SNX3-retromer mediates the retrograde endosome-to-TGN transport of WLS distinct from the SNX-BAR retromer pathway. The SNX27-retromer is believed to be involved in endosome-to-plasma membrane trafficking and recycling of a broad spectrum of cargo proteins. The CSC seems to act as recruitment hub for other proteins, such as the WASH complex and TBC1D5. Required for retrograde transport of lysosomal enzyme receptor IGF2R. Required to regulate transcytosis of the polymeric immunoglobulin receptor (pIgR-pIgA). Required for the endosomal localization of WASHC2A (indicative for the WASH complex). Required for the endosomal localization of TBC1D5. Mediates retromer cargo recognition of SORL1 and is involved in trafficking of SORL1 implicated in sorting and processing of APP. Involved in retromer-independent lysosomal sorting of F2R. Involved in recycling of ADRB2. Enhances the affinity of SNX27 for PDZ-binding motifs in cargo proteins. The polypeptide is Vacuolar protein sorting-associated protein 26A (Homo sapiens (Human)).